The following is a 348-amino-acid chain: Erlin-1 (348 aa).

Residues 1–7 (MNMTQAR) are Cytoplasmic-facing. Residues 8–28 (VLVAAVVGLVAVLLYASIHKI) form a helical membrane-spanning segment. Residues 29–348 (EEGHLAVYYR…NLIQNKESTG (320 aa)) lie on the Lumenal side of the membrane. Residue asparagine 108 is glycosylated (N-linked (GlcNAc...) asparagine). Lysine 269 carries the N6-acetyllysine modification. Positions 321-333 (TGRESSHPSKEAL) are enriched in basic and acidic residues. Residues 321–348 (TGRESSHPSKEALEPSGENLIQNKESTG) form a disordered region. Polar residues predominate over residues 339–348 (NLIQNKESTG).

Belongs to the band 7/mec-2 family. As to quaternary structure, forms a heteromeric complex with ERLIN2. In complex with ERLIN2, interacts with RNF170. Interacts with AMFR and SYVN1. Post-translationally, deubiquitinated by USP25; leading to stabilization.

Its subcellular location is the endoplasmic reticulum membrane. Functionally, component of the ERLIN1/ERLIN2 complex which mediates the endoplasmic reticulum-associated degradation (ERAD) of inositol 1,4,5-trisphosphate receptors (IP3Rs). Involved in regulation of cellular cholesterol homeostasis by regulation the SREBP signaling pathway. Binds cholesterol and may promote ER retention of the SCAP-SREBF complex. In Pongo abelii (Sumatran orangutan), this protein is Erlin-1.